We begin with the raw amino-acid sequence, 310 residues long: tRNA-cytidine(32) 2-sulfurtransferase (310 aa).

A PP-loop motif motif is present at residues 45 to 50 (SGGKDS). C120, C123, and C211 together coordinate [4Fe-4S] cluster.

This sequence belongs to the TtcA family. In terms of assembly, homodimer. It depends on Mg(2+) as a cofactor. Requires [4Fe-4S] cluster as cofactor.

Its subcellular location is the cytoplasm. It carries out the reaction cytidine(32) in tRNA + S-sulfanyl-L-cysteinyl-[cysteine desulfurase] + AH2 + ATP = 2-thiocytidine(32) in tRNA + L-cysteinyl-[cysteine desulfurase] + A + AMP + diphosphate + H(+). Its pathway is tRNA modification. In terms of biological role, catalyzes the ATP-dependent 2-thiolation of cytidine in position 32 of tRNA, to form 2-thiocytidine (s(2)C32). The sulfur atoms are provided by the cysteine/cysteine desulfurase (IscS) system. This Shewanella baltica (strain OS195) protein is tRNA-cytidine(32) 2-sulfurtransferase.